The chain runs to 266 residues: Mitochondrial import inner membrane translocase subunit Tim29 (266 aa).

The transit peptide at methionine 1–leucine 37 directs the protein to the mitochondrion. At serine 38 to arginine 65 the chain is on the mitochondrial matrix side. A helical transmembrane segment spans residues alanine 66–alanine 83. Over proline 84 to arginine 266 the chain is Mitochondrial intermembrane.

In terms of assembly, component of the TIM22 complex, which core is composed of TIMM22, associated with TIMM10 (TIMM10A and/or TIMM10B), TIMM9, AGK and TIMM29. Interacts with TIMM10B; the interaction is direct. Interacts with TOMM40; linking the TIM22 complex to the TOM complex. Interacts with TIMM22 (when oxidized); the interaction is direct.

The protein localises to the mitochondrion inner membrane. Functionally, component of the TIM22 complex, a complex that mediates the import and insertion of multi-pass transmembrane proteins into the mitochondrial inner membrane. The TIM22 complex forms a twin-pore translocase that uses the membrane potential as the external driving force. Required for the stability of the TIM22 complex and functions in the assembly of the TIMM22 protein into the TIM22 complex. May facilitate cooperation between TIM22 and TOM complexes by interacting with TOMM40. The protein is Mitochondrial import inner membrane translocase subunit Tim29 (Timm29) of Mus musculus (Mouse).